Reading from the N-terminus, the 196-residue chain is ATP-dependent Clp protease proteolytic subunit (196 aa).

The active-site Nucleophile is the serine 101. Histidine 126 is a catalytic residue.

This sequence belongs to the peptidase S14 family. As to quaternary structure, component of the chloroplastic Clp protease core complex.

Its subcellular location is the plastid. It localises to the chloroplast stroma. It catalyses the reaction Hydrolysis of proteins to small peptides in the presence of ATP and magnesium. alpha-casein is the usual test substrate. In the absence of ATP, only oligopeptides shorter than five residues are hydrolyzed (such as succinyl-Leu-Tyr-|-NHMec, and Leu-Tyr-Leu-|-Tyr-Trp, in which cleavage of the -Tyr-|-Leu- and -Tyr-|-Trp bonds also occurs).. Cleaves peptides in various proteins in a process that requires ATP hydrolysis. Has a chymotrypsin-like activity. Plays a major role in the degradation of misfolded proteins. The protein is ATP-dependent Clp protease proteolytic subunit of Nasturtium officinale (Watercress).